The chain runs to 214 residues: A-type ATP synthase subunit D (214 aa).

The protein belongs to the V-ATPase D subunit family. In terms of assembly, has multiple subunits with at least A(3), B(3), C, D, E, F, H, I and proteolipid K(x).

The protein resides in the cell membrane. Functionally, component of the A-type ATP synthase that produces ATP from ADP in the presence of a proton gradient across the membrane. The sequence is that of A-type ATP synthase subunit D from Thermococcus sibiricus (strain DSM 12597 / MM 739).